Here is a 614-residue protein sequence, read N- to C-terminus: DNA mismatch repair protein MutL (614 aa).

The disordered stretch occupies residues 355–411 (PLSTGRVSEADPSNYATQSKFDEKPRESGSQGQSSSISAPSSYSRGGEYSARSQPEL). Over residues 382 to 401 (SGSQGQSSSISAPSSYSRGG) the composition is skewed to low complexity.

The protein belongs to the DNA mismatch repair MutL/HexB family.

This protein is involved in the repair of mismatches in DNA. It is required for dam-dependent methyl-directed DNA mismatch repair. May act as a 'molecular matchmaker', a protein that promotes the formation of a stable complex between two or more DNA-binding proteins in an ATP-dependent manner without itself being part of a final effector complex. This chain is DNA mismatch repair protein MutL, found in Shewanella woodyi (strain ATCC 51908 / MS32).